The primary structure comprises 161 residues: Kininogen-2 (161 aa).

Residues 1–23 (MRLWFCLSFFVVLCLEHFPGTLA) form the signal peptide. Cys150 and Cys156 form a disulfide bridge. Residue Val160 is modified to Valine amide.

It belongs to the bradykinin-related peptide family. Expressed by the skin glands.

The protein localises to the secreted. Functionally, inhibits ACE with a Ki of 1.6 uM, and targets B2 bradykinin receptor (BDKRB2). Provokes contraction of smooth muscle preparation (ileum). In vivo, induces an early hyperalgesic effects in living rats after intraplantar injection. Inhibits the bradykinin-induced in vitro relaxation of rat arterial smooth muscle and constriction of intestinal smooth muscle. May target bradykinin receptors (BDKRB). The chain is Kininogen-2 from Bombina orientalis (Oriental fire-bellied toad).